Reading from the N-terminus, the 376-residue chain is Queuine tRNA-ribosyltransferase (376 aa).

Aspartate 93 (proton acceptor) is an active-site residue. Residues 93-97 (DSGGF), aspartate 147, glutamine 190, and glycine 217 each bind substrate. The tract at residues 248-254 (GVGTPDD) is RNA binding. Aspartate 267 acts as the Nucleophile in catalysis. The tract at residues 272–276 (TRAGR) is RNA binding; important for wobble base 34 recognition.

Belongs to the queuine tRNA-ribosyltransferase family. Homodimer. Within each dimer, one monomer is responsible for RNA recognition and catalysis, while the other monomer binds to the replacement base PreQ1.

It carries out the reaction 7-aminomethyl-7-carbaguanine + guanosine(34) in tRNA = 7-aminomethyl-7-carbaguanosine(34) in tRNA + guanine. The protein operates within tRNA modification; tRNA-queuosine biosynthesis. Its function is as follows. Catalyzes the base-exchange of a guanine (G) residue with the queuine precursor 7-aminomethyl-7-deazaguanine (PreQ1) at position 34 (anticodon wobble position) in tRNAs with GU(N) anticodons (tRNA-Asp, -Asn, -His and -Tyr). Catalysis occurs through a double-displacement mechanism. The nucleophile active site attacks the C1' of nucleotide 34 to detach the guanine base from the RNA, forming a covalent enzyme-RNA intermediate. The proton acceptor active site deprotonates the incoming PreQ1, allowing a nucleophilic attack on the C1' of the ribose to form the product. After dissociation, two additional enzymatic reactions on the tRNA convert PreQ1 to queuine (Q), resulting in the hypermodified nucleoside queuosine (7-(((4,5-cis-dihydroxy-2-cyclopenten-1-yl)amino)methyl)-7-deazaguanosine). The sequence is that of Queuine tRNA-ribosyltransferase from Mesorhizobium japonicum (strain LMG 29417 / CECT 9101 / MAFF 303099) (Mesorhizobium loti (strain MAFF 303099)).